A 675-amino-acid polypeptide reads, in one-letter code: Heat shock 70 kDa protein, mitochondrial (675 aa).

A mitochondrion-targeting transit peptide spans 1-52 (MAATLLRSLQRRNLSSSSVSAFRSLTGSTKTSYATHKLASLTRPFSSRPAGN). The interval 639-675 (VSKIGQHMSGGSSGGPSEGGSQGGEQAPEAEYEEVKK) is disordered. Residues 649–661 (GSSGGPSEGGSQG) show a composition bias toward gly residues. Acidic residues predominate over residues 666–675 (PEAEYEEVKK).

Belongs to the heat shock protein 70 family.

It localises to the mitochondrion. The polypeptide is Heat shock 70 kDa protein, mitochondrial (HSP1) (Pisum sativum (Garden pea)).